The following is a 253-amino-acid chain: Probable U3 small nucleolar RNA-associated protein 11 (253 aa).

Residues 1–21 form a disordered region; sequence MAAAFRKAVKSRQREYRERSQ. Glycyl lysine isopeptide (Lys-Gly) (interchain with G-Cter in SUMO2) cross-links involve residues Lys-74, Lys-83, and Lys-86. Thr-90 is subject to Phosphothreonine. Glycyl lysine isopeptide (Lys-Gly) (interchain with G-Cter in SUMO2) cross-links involve residues Lys-103, Lys-120, Lys-143, Lys-144, Lys-180, Lys-211, Lys-218, Lys-235, and Lys-236. Ser-241 is modified (phosphoserine). Lys-246 is covalently cross-linked (Glycyl lysine isopeptide (Lys-Gly) (interchain with G-Cter in SUMO2)).

It belongs to the UTP11 family. Part of the small subunit (SSU) processome, composed of more than 70 proteins and the RNA chaperone small nucleolar RNA (snoRNA) U3.

The protein localises to the nucleus. It is found in the nucleolus. Its function is as follows. Part of the small subunit (SSU) processome, first precursor of the small eukaryotic ribosomal subunit. During the assembly of the SSU processome in the nucleolus, many ribosome biogenesis factors, an RNA chaperone and ribosomal proteins associate with the nascent pre-rRNA and work in concert to generate RNA folding, modifications, rearrangements and cleavage as well as targeted degradation of pre-ribosomal RNA by the RNA exosome. Involved in nucleolar processing of pre-18S ribosomal RNA. The polypeptide is Probable U3 small nucleolar RNA-associated protein 11 (Rattus norvegicus (Rat)).